The sequence spans 230 residues: Orotidine 5'-phosphate decarboxylase (230 aa).

Substrate contacts are provided by residues Asp-10, Lys-32, 59-68 (DLKFHDIPRT), Thr-116, Arg-177, Gln-186, Gly-206, and Arg-207. Lys-61 functions as the Proton donor in the catalytic mechanism.

It belongs to the OMP decarboxylase family. Type 1 subfamily. As to quaternary structure, homodimer.

The enzyme catalyses orotidine 5'-phosphate + H(+) = UMP + CO2. Its pathway is pyrimidine metabolism; UMP biosynthesis via de novo pathway; UMP from orotate: step 2/2. In terms of biological role, catalyzes the decarboxylation of orotidine 5'-monophosphate (OMP) to uridine 5'-monophosphate (UMP). The protein is Orotidine 5'-phosphate decarboxylase of Methylacidiphilum infernorum (isolate V4) (Methylokorus infernorum (strain V4)).